Here is a 248-residue protein sequence, read N- to C-terminus: Protein maestro (248 aa).

The disordered stretch occupies residues 1–20 (MDQRQRRILGQPLSIPTSQP). HEAT repeat units lie at residues 44–79 (EPLK…AREA) and 128–163 (SFFI…AAFA).

It is found in the nucleus. It localises to the nucleolus. The chain is Protein maestro (MRO) from Macaca fascicularis (Crab-eating macaque).